A 205-amino-acid chain; its full sequence is MIVQRLLNQLIAQDIRDFRVLAAIAKVPRQLFVDEAMAHKAWDNTALPIGNGQTISQPYMVARMTELLIQNDPAHVLEIGTGSGYQTAVLAHLVEHVYTVERIKSLQFQARRRLRQLDLHNVSAKHGNGWLGWPNKGPFDAILVTAAASEVPTALTDQLADGGRLVLPVGDSHQTLQLIERAGSQLTSRILEPVRFVPLIDGDVE.

Serine 56 is an active-site residue.

This sequence belongs to the methyltransferase superfamily. L-isoaspartyl/D-aspartyl protein methyltransferase family.

It localises to the cytoplasm. It carries out the reaction [protein]-L-isoaspartate + S-adenosyl-L-methionine = [protein]-L-isoaspartate alpha-methyl ester + S-adenosyl-L-homocysteine. Catalyzes the methyl esterification of L-isoaspartyl residues in peptides and proteins that result from spontaneous decomposition of normal L-aspartyl and L-asparaginyl residues. It plays a role in the repair and/or degradation of damaged proteins. This chain is Protein-L-isoaspartate O-methyltransferase, found in Aeromonas salmonicida (strain A449).